The following is a 282-amino-acid chain: Putative 23S rRNA (guanine-N(1)-)-methyltransferase YxjB (282 aa).

Residues Cys12, Cys15, Cys29, and His34 each coordinate Zn(2+). 103–104 is an S-adenosyl-L-methionine binding site; the sequence is EG.

Belongs to the methyltransferase superfamily. RlmA family.

In Bacillus subtilis (strain 168), this protein is Putative 23S rRNA (guanine-N(1)-)-methyltransferase YxjB (yxjB).